Here is a 135-residue protein sequence, read N- to C-terminus: Large-conductance mechanosensitive channel (135 aa).

The next 2 membrane-spanning stretches (helical) occupy residues 10 to 30 and 76 to 96; these read FAMK…AAFG and GAFI…FCAI.

This sequence belongs to the MscL family. Homopentamer.

The protein localises to the cell inner membrane. Channel that opens in response to stretch forces in the membrane lipid bilayer. May participate in the regulation of osmotic pressure changes within the cell. The chain is Large-conductance mechanosensitive channel from Proteus mirabilis (strain HI4320).